The primary structure comprises 901 residues: Protein translocase subunit SecA (901 aa).

Residues glutamine 87, 105–109 (GEGKT), and aspartate 512 contribute to the ATP site. Positions 859-901 (HQDDDSAAAAALAAQTGERKVGRNDPCPCGSGKKYKQCHGRLQ) are disordered. Zn(2+)-binding residues include cysteine 885, cysteine 887, cysteine 896, and histidine 897. Residues 891 to 901 (KKYKQCHGRLQ) are compositionally biased toward basic residues.

It belongs to the SecA family. In terms of assembly, monomer and homodimer. Part of the essential Sec protein translocation apparatus which comprises SecA, SecYEG and auxiliary proteins SecDF-YajC and YidC. It depends on Zn(2+) as a cofactor.

It localises to the cell inner membrane. It is found in the cytoplasm. The enzyme catalyses ATP + H2O + cellular proteinSide 1 = ADP + phosphate + cellular proteinSide 2.. Its function is as follows. Part of the Sec protein translocase complex. Interacts with the SecYEG preprotein conducting channel. Has a central role in coupling the hydrolysis of ATP to the transfer of proteins into and across the cell membrane, serving both as a receptor for the preprotein-SecB complex and as an ATP-driven molecular motor driving the stepwise translocation of polypeptide chains across the membrane. The sequence is that of Protein translocase subunit SecA from Escherichia coli O6:K15:H31 (strain 536 / UPEC).